A 176-amino-acid polypeptide reads, in one-letter code: ATP-dependent protease subunit HslV (176 aa).

Threonine 6 is a catalytic residue. The Na(+) site is built by serine 161, cysteine 164, and threonine 167.

This sequence belongs to the peptidase T1B family. HslV subfamily. In terms of assembly, a double ring-shaped homohexamer of HslV is capped on each side by a ring-shaped HslU homohexamer. The assembly of the HslU/HslV complex is dependent on binding of ATP.

It localises to the cytoplasm. The enzyme catalyses ATP-dependent cleavage of peptide bonds with broad specificity.. Allosterically activated by HslU binding. Its function is as follows. Protease subunit of a proteasome-like degradation complex believed to be a general protein degrading machinery. The chain is ATP-dependent protease subunit HslV from Thermosipho melanesiensis (strain DSM 12029 / CIP 104789 / BI429).